A 235-amino-acid polypeptide reads, in one-letter code: Small ribosomal subunit protein uS2c (235 aa).

It belongs to the universal ribosomal protein uS2 family.

It localises to the plastid. Its subcellular location is the chloroplast. This Cryptomeria japonica (Japanese cedar) protein is Small ribosomal subunit protein uS2c (rps2).